The chain runs to 483 residues: Glutamyl-tRNA(Gln) amidotransferase subunit A (483 aa).

Active-site charge relay system residues include lysine 75 and serine 150. Serine 174 acts as the Acyl-ester intermediate in catalysis.

Belongs to the amidase family. GatA subfamily. Heterotrimer of A, B and C subunits.

The enzyme catalyses L-glutamyl-tRNA(Gln) + L-glutamine + ATP + H2O = L-glutaminyl-tRNA(Gln) + L-glutamate + ADP + phosphate + H(+). Its function is as follows. Allows the formation of correctly charged Gln-tRNA(Gln) through the transamidation of misacylated Glu-tRNA(Gln) in organisms which lack glutaminyl-tRNA synthetase. The reaction takes place in the presence of glutamine and ATP through an activated gamma-phospho-Glu-tRNA(Gln). This chain is Glutamyl-tRNA(Gln) amidotransferase subunit A, found in Deinococcus geothermalis (strain DSM 11300 / CIP 105573 / AG-3a).